Here is a 570-residue protein sequence, read N- to C-terminus: Auxin efflux carrier component 6 (570 aa).

The Extracellular portion of the chain corresponds to 1–6 (MITGNE). The chain crosses the membrane as a helical span at residues 7-27 (FYTVMCAMAPLYFAMFVAYGS). Residues 28 to 38 (VKWCKIFTPAQ) are Cytoplasmic-facing. The chain crosses the membrane as a helical span at residues 39–59 (CSGINRFVSVFAVPVLSFHFI). V51 is a binding site for (indol-3-yl)acetate. Over 60-70 (SQNNPYKMDTM) the chain is Extracellular. The chain crosses the membrane as a helical span at residues 71-91 (FILADTLSKIFVFVLLSLWAV). Residues 92-100 (FFKAGGLDW) are Cytoplasmic-facing. Residues 101 to 121 (LITLFSIATLPNTLVMGIPLL) form a helical membrane-spanning segment. N112 and L114 together coordinate (indol-3-yl)acetate. Residues 122 to 131 (QAMYGDYTQT) lie on the Extracellular side of the membrane. The helical transmembrane segment at 132 to 152 (LMVQLVVLQCIIWYTLLLFLF) threads the bilayer. Y145 contacts (indol-3-yl)acetate. At 153 to 430 (ELRAARLLIR…LSRNPNTYSS (278 aa)) the chain is on the cytoplasmic side. Phosphoserine is present on residues S230 and S308. Residues 431–451 (LLGLVWSLISFKWNIPMPNIV) form a helical membrane-spanning segment. The Extracellular portion of the chain corresponds to 452-454 (DFS). Residues 455–475 (IKIISDAGLGMAMFSLGLFMA) traverse the membrane as a helical segment. Residues 476 to 491 (LQPKMIPCGAKKATMG) are Cytoplasmic-facing. Residues 492 to 512 (MLIRFISGPLFMAGASLLVGL) form a helical membrane-spanning segment. The Extracellular portion of the chain corresponds to 513 to 515 (RGS). The helical transmembrane segment at 516-536 (RLHAAIVQAALPQGIVPFVFA) threads the bilayer. (indol-3-yl)acetate contacts are provided by I530 and V531. The Cytoplasmic segment spans residues 537 to 549 (REYNLHPDLLSTL). The helical transmembrane segment at 550-570 (VIFGMIVSLPVTILYYVLLGL) threads the bilayer.

Belongs to the auxin efflux carrier (TC 2.A.69.1) family. In terms of assembly, homodimer. In terms of tissue distribution, expressed in the vasculature of the primary root, cotyledons, floral stem, sepals and the main transmitting tract of the reproductive silique. Expressed in embryos, shoot meristem, root tip and lateral root meristems. Expressed in the nectaries and the floral organ boundaries of the anthers. Detected in pollen. Expressed in broad subepidermal domains that narrowed to sites of vein formation. Expressed in veins of mature leaves.

Its subcellular location is the endoplasmic reticulum membrane. Its function is as follows. Component of the intracellular auxin-transport pathway. Regulates auxin transport and auxin homeostasis. Directly involved in the regulation of nectar production. Involved in unfolded protein response (UPR) activation. Involved in the control of vein patterning. Redundantly with PIN8, inhibits the vein-formation-promoting functions of PIN5. PIN5, PIN6, and PIN8 control vein network geometry, but they are expressed in mutually exclusive domains of leaf vascular cells. The protein is Auxin efflux carrier component 6 of Arabidopsis thaliana (Mouse-ear cress).